The chain runs to 741 residues: Cytosolic phospholipase A2 (741 aa).

Residues 1 to 116 (MSNIIVEHQY…KVAQMEHVTL (116 aa)) form the C2 domain. The phospholipid binding stretch occupies residues 1–172 (MSNIIVEHQY…IKKLLKMENP (172 aa)). Ca(2+) is bound by residues aspartate 34, threonine 35, aspartate 37, asparagine 59, aspartate 87, alanine 88, and asparagine 89. A PLA2c domain is found at 132–729 (VCASTDLRFS…SLSEIENKKF (598 aa)). Catalysis depends on serine 223, which acts as the Nucleophile. Residues 406–453 (TSSSTMEEELEQIKPEHIVGDDSADNEEETQRGGTESADAEDERQRHA) are disordered. Positions 416-425 (EQIKPEHIVG) are enriched in basic and acidic residues. Serine 498 is subject to Phosphoserine; by MAPK. The Proton acceptor role is filled by aspartate 540.

In terms of processing, activated by phosphorylation on a serine residue.

It is found in the cytoplasm. The protein localises to the cytoplasmic vesicle. The catalysed reaction is a 1,2-diacyl-sn-glycero-3-phosphocholine + H2O = a 1-acyl-sn-glycero-3-phosphocholine + a fatty acid + H(+). It catalyses the reaction a 1-acyl-sn-glycero-3-phosphocholine + H2O = sn-glycerol 3-phosphocholine + a fatty acid + H(+). Its activity is regulated as follows. Stimulated by agonists such as ATP, EGF, thrombin and bradykinin as well as by cytosolic Ca(2+). Its function is as follows. Selectively hydrolyzes arachidonyl phospholipids in the sn-2 position releasing arachidonic acid. Together with its lysophospholipid activity, it is implicated in the initiation of the inflammatory response. The polypeptide is Cytosolic phospholipase A2 (pla2g4a) (Danio rerio (Zebrafish)).